A 305-amino-acid polypeptide reads, in one-letter code: MKKILLAIGALVTAVIAIGIVFSHMILFIKKKTDEDIIKRETDNGHDVFESFEQMEKTAFVIPSAYGYDIKGYHVAPHDTPNTIIICHGVTMNVLNSLKYMHLFLDLGWNVLIYDHRRHGQSGGKTTSYGFYEKDDLNKVVSLLKNKTNHRGLIGIHGESMGAVTALLYAGAHCSDGADFYIADCPFACFDEQLAYRLRAEYRLPSWPLLPIADFFLKLRGGYRAREVSPLAVIDKIEKPVLFIHSKDDDYIPVSSTERLYEKKRGPKALYIAENGEHAMSYTKNRHTYRKTVQEFLDNMNDSTE.

The helical transmembrane segment at 8-28 threads the bilayer; sequence IGALVTAVIAIGIVFSHMILF.

It localises to the membrane. This is an uncharacterized protein from Bacillus subtilis (strain 168).